The chain runs to 125 residues: Holo-[acyl-carrier-protein] synthase (125 aa).

Mg(2+) contacts are provided by D8 and E57.

This sequence belongs to the P-Pant transferase superfamily. AcpS family. Mg(2+) serves as cofactor.

Its subcellular location is the cytoplasm. The catalysed reaction is apo-[ACP] + CoA = holo-[ACP] + adenosine 3',5'-bisphosphate + H(+). In terms of biological role, transfers the 4'-phosphopantetheine moiety from coenzyme A to a Ser of acyl-carrier-protein. The sequence is that of Holo-[acyl-carrier-protein] synthase from Dechloromonas aromatica (strain RCB).